Consider the following 474-residue polypeptide: Trehalose-6-phosphate synthase (474 aa).

A D-glucose 6-phosphate-binding site is contributed by Arg-10. 22–23 (GG) serves as a coordination point for UDP-alpha-D-glucose. D-glucose 6-phosphate is bound by residues Tyr-77 and Asp-131. UDP-alpha-D-glucose-binding residues include Arg-263 and Lys-268. Arg-301 lines the D-glucose 6-phosphate pocket. UDP-alpha-D-glucose is bound by residues Phe-340 and 366-370 (LVAKE).

It belongs to the glycosyltransferase 20 family. Homotetramer.

The catalysed reaction is D-glucose 6-phosphate + UDP-alpha-D-glucose = alpha,alpha-trehalose 6-phosphate + UDP + H(+). Its pathway is glycan biosynthesis; trehalose biosynthesis. Its function is as follows. Probably involved in the osmoprotection via the biosynthesis of trehalose. Catalyzes the transfer of glucose from UDP-alpha-D-glucose (UDP-Glc) to D-glucose 6-phosphate (Glc-6-P) to form trehalose-6-phosphate. Acts with retention of the anomeric configuration of the UDP-sugar donor. The polypeptide is Trehalose-6-phosphate synthase (Escherichia coli O9:H4 (strain HS)).